A 533-amino-acid chain; its full sequence is L-aspartate oxidase 1 (533 aa).

FAD is bound by residues 10-13 (SGLA), lysine 32, 39-46 (ASDWAQGG), and aspartate 214. Catalysis depends on arginine 281, which acts as the Proton donor/acceptor. FAD is bound by residues glutamate 366 and 382 to 383 (SL).

This sequence belongs to the FAD-dependent oxidoreductase 2 family. NadB subfamily. The cofactor is FAD.

It is found in the cytoplasm. It catalyses the reaction L-aspartate + O2 = iminosuccinate + H2O2. Its pathway is cofactor biosynthesis; NAD(+) biosynthesis; iminoaspartate from L-aspartate (oxidase route): step 1/1. Functionally, catalyzes the oxidation of L-aspartate to iminoaspartate, the first step in the de novo biosynthesis of NAD(+). This Ralstonia nicotianae (strain ATCC BAA-1114 / GMI1000) (Ralstonia solanacearum) protein is L-aspartate oxidase 1 (nadB1).